A 195-amino-acid polypeptide reads, in one-letter code: Dephospho-CoA kinase (195 aa).

In terms of domain architecture, DPCK spans 3-195 (IIGLTGSIAM…FSIIENLLKN (193 aa)). 11 to 16 (AMGKST) is a binding site for ATP.

This sequence belongs to the CoaE family.

It localises to the cytoplasm. The enzyme catalyses 3'-dephospho-CoA + ATP = ADP + CoA + H(+). The protein operates within cofactor biosynthesis; coenzyme A biosynthesis; CoA from (R)-pantothenate: step 5/5. In terms of biological role, catalyzes the phosphorylation of the 3'-hydroxyl group of dephosphocoenzyme A to form coenzyme A. This is Dephospho-CoA kinase from Bartonella quintana (strain Toulouse) (Rochalimaea quintana).